We begin with the raw amino-acid sequence, 297 residues long: N-acetylneuraminate lyase (297 aa).

2 residues coordinate aceneuramate: serine 47 and threonine 48. The active-site Proton donor is tyrosine 137. Lysine 165 acts as the Schiff-base intermediate with substrate in catalysis. The aceneuramate site is built by threonine 167, glycine 189, aspartate 191, glutamate 192, and serine 208.

Belongs to the DapA family. NanA subfamily. In terms of assembly, homotetramer.

The protein resides in the cytoplasm. It catalyses the reaction aceneuramate = aldehydo-N-acetyl-D-mannosamine + pyruvate. The protein operates within amino-sugar metabolism; N-acetylneuraminate degradation; D-fructose 6-phosphate from N-acetylneuraminate: step 1/5. In terms of biological role, catalyzes the reversible aldol cleavage of N-acetylneuraminic acid (sialic acid; Neu5Ac) to form pyruvate and N-acetylmannosamine (ManNAc) via a Schiff base intermediate. The chain is N-acetylneuraminate lyase from Salmonella agona (strain SL483).